The sequence spans 39 residues: Photosystem II reaction center protein L (39 aa).

Residues 18–38 (SLYLGLLSVFVLGILFSSYFF) traverse the membrane as a helical segment.

The protein belongs to the PsbL family. In terms of assembly, PSII is composed of 1 copy each of membrane proteins PsbA, PsbB, PsbC, PsbD, PsbE, PsbF, PsbH, PsbI, PsbJ, PsbK, PsbL, PsbM, PsbT, PsbX, PsbY, Psb30/Ycf12, peripheral proteins PsbO, CyanoQ (PsbQ), PsbU, PsbV and a large number of cofactors. It forms dimeric complexes.

The protein resides in the cellular thylakoid membrane. One of the components of the core complex of photosystem II (PSII). PSII is a light-driven water:plastoquinone oxidoreductase that uses light energy to abstract electrons from H(2)O, generating O(2) and a proton gradient subsequently used for ATP formation. It consists of a core antenna complex that captures photons, and an electron transfer chain that converts photonic excitation into a charge separation. This subunit is found at the monomer-monomer interface and is required for correct PSII assembly and/or dimerization. The polypeptide is Photosystem II reaction center protein L (Prochlorococcus marinus (strain MIT 9301)).